Here is a 374-residue protein sequence, read N- to C-terminus: Calcium/calmodulin-dependent protein kinase type 1 (374 aa).

A Protein kinase domain is found at 20-276 (YDFRDVLGTG…CEQALQHPWI (257 aa)). Residues 26-34 (LGTGAFSEV) and Lys-49 contribute to the ATP site. Lys-59 is covalently cross-linked (Glycyl lysine isopeptide (Lys-Gly) (interchain with G-Cter in ubiquitin)). Asp-141 acts as the Proton acceptor in catalysis. Residue Thr-177 is modified to Phosphothreonine; by CaMKK1 and CaMKK2. The tract at residues 276-316 (IAGDTALDKNIHQSVSEQIKKNFAKSKWKQAFNATAVVRHM) is autoinhibitory domain. The segment at 296-317 (KNFAKSKWKQAFNATAVVRHMR) is calmodulin-binding. A Nuclear export signal motif is present at residues 315–321 (HMRKLQL).

This sequence belongs to the protein kinase superfamily. CAMK Ser/Thr protein kinase family. CaMK subfamily. As to quaternary structure, monomer. Interacts with XPO1. Post-translationally, phosphorylated by CaMKK1 and CaMKK2 on Thr-177. In terms of processing, polybiquitinated by the E3 ubiquitin-protein ligase complex SCF(FBXL12), leading to proteasomal degradation. Ubiquitous.

It is found in the cytoplasm. The protein resides in the nucleus. It catalyses the reaction L-seryl-[protein] + ATP = O-phospho-L-seryl-[protein] + ADP + H(+). The catalysed reaction is L-threonyl-[protein] + ATP = O-phospho-L-threonyl-[protein] + ADP + H(+). Its activity is regulated as follows. Activated by Ca(2+)/calmodulin. Binding of calmodulin results in conformational change that relieves intrasteric autoinhibition and allows phosphorylation of Thr-177 within the activation loop by CaMKK1 or CaMKK2. Phosphorylation of Thr-177 results in several fold increase in total activity. Unlike CaMK4, is unable to exhibit autonomous activity after Ca(2+)/calmodulin activation. Calcium/calmodulin-dependent protein kinase that operates in the calcium-triggered CaMKK-CaMK1 signaling cascade and, upon calcium influx, regulates transcription activators activity, cell cycle, hormone production, cell differentiation, actin filament organization and neurite outgrowth. Recognizes the substrate consensus sequence [MVLIF]-x-R-x(2)-[ST]-x(3)-[MVLIF]. Regulates axonal extension and growth cone motility in hippocampal and cerebellar nerve cells. Upon NMDA receptor-mediated Ca(2+) elevation, promotes dendritic growth in hippocampal neurons and is essential in synapses for full long-term potentiation (LTP) and ERK2-dependent translational activation. Downstream of NMDA receptors, promotes the formation of spines and synapses in hippocampal neurons by phosphorylating ARHGEF7/BETAPIX on 'Ser-673', which results in the enhancement of ARHGEF7 activity and activation of RAC1. Promotes neuronal differentiation and neurite outgrowth by activation and phosphorylation of MARK2 on 'Ser-91', 'Ser-92', 'Ser-93' and 'Ser-294'. Promotes nuclear export of HDAC5 and binding to 14-3-3 by phosphorylation of 'Ser-259' and 'Ser-498' in the regulation of muscle cell differentiation. Regulates NUMB-mediated endocytosis by phosphorylation of NUMB on 'Ser-276' and 'Ser-295'. Involved in the regulation of basal and estrogen-stimulated migration of medulloblastoma cells through ARHGEF7/BETAPIX phosphorylation. Is required for proper activation of cyclin-D1/CDK4 complex during G1 progression in diploid fibroblasts. Plays a role in K(+) and ANG2-mediated regulation of the aldosterone synthase (CYP11B2) to produce aldosterone in the adrenal cortex. Phosphorylates EIF4G3/eIF4GII. In vitro phosphorylates CREB1, ATF1, CFTR, MYL9 and SYN1/synapsin I. This chain is Calcium/calmodulin-dependent protein kinase type 1 (Camk1), found in Mus musculus (Mouse).